The chain runs to 85 residues: Cytochrome c6 (85 aa).

The heme c site is built by Cys14, Cys17, His18, and Met58.

It belongs to the cytochrome c family. PetJ subfamily. Monomer. In terms of processing, binds 1 heme c group covalently per subunit.

The protein resides in the cellular thylakoid lumen. Functionally, functions as an electron carrier between membrane-bound cytochrome b6-f and photosystem I in oxygenic photosynthesis. In Leptolyngbya boryana (Plectonema boryanum), this protein is Cytochrome c6 (petJ).